The following is a 291-amino-acid chain: ATP synthase subunit a (291 aa).

5 consecutive transmembrane segments (helical) span residues 47-67 (FTNL…LVFV), 140-160 (HFLI…IVGF), 167-187 (FFSF…LVLL), 207-227 (MMAG…MLFL), and 230-250 (IFYF…TGLE).

The protein belongs to the ATPase A chain family. F-type ATPases have 2 components, CF(1) - the catalytic core - and CF(0) - the membrane proton channel. CF(1) has five subunits: alpha(3), beta(3), gamma(1), delta(1), epsilon(1). CF(0) has three main subunits: a, b and c.

Its subcellular location is the mitochondrion inner membrane. Its function is as follows. Mitochondrial membrane ATP synthase (F(1)F(0) ATP synthase or Complex V) produces ATP from ADP in the presence of a proton gradient across the membrane which is generated by electron transport complexes of the respiratory chain. F-type ATPases consist of two structural domains, F(1) - containing the extramembraneous catalytic core and F(0) - containing the membrane proton channel, linked together by a central stalk and a peripheral stalk. During catalysis, ATP synthesis in the catalytic domain of F(1) is coupled via a rotary mechanism of the central stalk subunits to proton translocation. Key component of the proton channel; it may play a direct role in the translocation of protons across the membrane. The chain is ATP synthase subunit a (ATP6) from Zea mays (Maize).